Here is a 69-residue protein sequence, read N- to C-terminus: Calcium-binding protein (69 aa).

EF-hand domains follow at residues 2 to 37 (VNRTEAAQLLKHLDRDKSGKISSQELMEFLHTVNCP) and 38 to 69 (FKKEQVEKFIKQHDKDGDGQLNTDELLDVLCS). 10 residues coordinate Ca(2+): D15, D17, S19, K21, E26, D51, D53, D55, Q57, and E62.

This Schistosoma mansoni (Blood fluke) protein is Calcium-binding protein.